Here is a 475-residue protein sequence, read N- to C-terminus: Peroxisome proliferator-activated receptor gamma (475 aa).

A glycan (O-linked (GlcNAc) threonine) is linked at threonine 54. Serine 82 is subject to Phosphoserine; by MAPK. Positions 106 to 180 (AIECRVCGDK…VGMSHNAIRF (75 aa)) form a DNA-binding region, nuclear receptor. 2 consecutive NR C4-type zinc fingers follow at residues 109 to 129 (CRVC…CEGC) and 146 to 168 (CDLN…FQKC). Residues 175–250 (HNAIRFGRMP…DKSPFVIYDM (76 aa)) form an interaction with FAM120B region. Positions 208-473 (DLRALAKHLY…HPLLQEIYKD (266 aa)) constitute an NR LBD domain. Residue lysine 222 forms a Glycyl lysine isopeptide (Lys-Gly) (interchain with G-Cter in ubiquitin) linkage. Positions 465 to 473 (PLLQEIYKD) match the 9aaTAD motif.

It belongs to the nuclear hormone receptor family. NR1 subfamily. Interacts with FOXO1 (acetylated form). Heterodimer with other nuclear receptors, such as RXRA. The heterodimer with the retinoic acid receptor RXRA is called adipocyte-specific transcription factor ARF6. Interacts with NCOA6 coactivator, leading to a strong increase in transcription of target genes. Interacts with coactivator PPARBP, leading to a mild increase in transcription of target genes. Interacts with NOCA7 in a ligand-inducible manner. Interacts with NCOA1 and NCOA2 LXXLL motifs. Interacts with ASXL1, ASXL2, DNTTIP2, FAM120B, MAP2K1/MEK1, NR0B2, PDPK1, PRDM16, PRMT2 and TGFB1I1. Interacts (when activated by agonist) with PPP5C. Interacts with HELZ2 and THRAP3; the interaction stimulates the transcriptional activity of PPARG. Interacts with PER2, the interaction is ligand dependent and blocks PPARG recruitment to target promoters. Interacts with NOCT. Interacts with ACTN4. Interacts (when in the liganded conformation) with GPS2. Interacts with CRY1 and CRY2 in a ligand-dependent manner. In the absence of hormonal ligand, interacts with TACC1. In macrophages, interacts with PAQR3 and STUB1; the interactions promote PPARG poylubiquitination and STUB1-mediated degradation. Post-translationally, O-GlcNAcylation at Thr-54 reduces transcriptional activity in adipocytes. In terms of processing, phosphorylated at basal conditions and dephosphorylated when treated with the ligand. May be dephosphorylated by PPP5C. The phosphorylated form may be inactive and dephosphorylation induces adipogenic activity. Ubiquitinated by E3 ubiquitin-protein ligase complex containing FBXO9; leading to proteasomal degradation. Ubiquitinated at Lys-222 by TRIM55 leading to proteasomal degradation. Ubiquitinated by E3 ubiquitin-protein ligase STUB1/CHIP; leading to proteasomal degradation.

The protein resides in the nucleus. The protein localises to the cytoplasm. With respect to regulation, PDPK1 activates its transcriptional activity independently of its kinase activity. Interacts with HELZ2 and THRAP3; the interaction enhances the transcriptional activity of PPARG. Nuclear receptor that binds peroxisome proliferators such as hypolipidemic drugs and fatty acids. Once activated by a ligand, the nuclear receptor binds to DNA specific PPAR response elements (PPRE) and modulates the transcription of its target genes, such as acyl-CoA oxidase. It therefore controls the peroxisomal beta-oxidation pathway of fatty acids. Key regulator of adipocyte differentiation and glucose homeostasis. ARF6 acts as a key regulator of the tissue-specific adipocyte P2 (aP2) enhancer. Acts as a critical regulator of gut homeostasis by suppressing NF-kappa-B-mediated pro-inflammatory responses. Plays a role in the regulation of cardiovascular circadian rhythms by regulating the transcription of BMAL1 in the blood vessels. This is Peroxisome proliferator-activated receptor gamma (PPARG) from Cricetulus griseus (Chinese hamster).